Consider the following 435-residue polypeptide: 3-ketoacyl-CoA thiolase (435 aa).

Residue cysteine 98 is the Acyl-thioester intermediate of the active site. Active-site proton acceptor residues include histidine 391 and cysteine 421.

This sequence belongs to the thiolase-like superfamily. Thiolase family. In terms of assembly, heterotetramer of two alpha chains (FadJ) and two beta chains (FadI).

The protein localises to the cytoplasm. The catalysed reaction is an acyl-CoA + acetyl-CoA = a 3-oxoacyl-CoA + CoA. It participates in lipid metabolism; fatty acid beta-oxidation. In terms of biological role, catalyzes the final step of fatty acid oxidation in which acetyl-CoA is released and the CoA ester of a fatty acid two carbons shorter is formed. The protein is 3-ketoacyl-CoA thiolase of Vibrio parahaemolyticus serotype O3:K6 (strain RIMD 2210633).